A 103-amino-acid polypeptide reads, in one-letter code: Large ribosomal subunit protein bL21 (103 aa).

This sequence belongs to the bacterial ribosomal protein bL21 family. In terms of assembly, part of the 50S ribosomal subunit. Contacts protein L20.

In terms of biological role, this protein binds to 23S rRNA in the presence of protein L20. The sequence is that of Large ribosomal subunit protein bL21 from Desulforudis audaxviator (strain MP104C).